The following is a 790-amino-acid chain: Penicillin-binding protein 1A (790 aa).

Residues 1 to 20 (MANVRKRRKKKNEHKALRLT) lie on the Cytoplasmic side of the membrane. Residues 21-41 (FITLLMVFLFSCVAAAGVGLA) form a helical; Signal-anchor for type II membrane protein membrane-spanning segment. Over 42 to 790 (MIKAAPPLDV…RKRKMIKPQI (749 aa)) the chain is Extracellular. The transglycosylase stretch occupies residues 61–230 (SVIYDDKNKL…PQSPSTFYNA (170 aa)). The active-site Proton donor; for transglycosylase activity is E100. The tract at residues 363–656 (ASVSIVDYKT…AALIWKLIMG (294 aa)) is transpeptidase. The active-site Acyl-ester intermediate; for transpeptidase activity is S402. Residues 720 to 790 (NKDKDDDDDD…RKRKMIKPQI (71 aa)) are disordered. Residues 724-740 (DDDDDDKDKDKEDEEEN) show a composition bias toward acidic residues. The span at 741 to 779 (KDEKNEDKKEAKDNTKNKDKDKKKDNDRKIDMDKKPDSS) shows a compositional bias: basic and acidic residues. Basic residues predominate over residues 780 to 790 (KRKRKMIKPQI).

In the N-terminal section; belongs to the glycosyltransferase 51 family. This sequence in the C-terminal section; belongs to the transpeptidase family.

The protein localises to the cell membrane. The catalysed reaction is [GlcNAc-(1-&gt;4)-Mur2Ac(oyl-L-Ala-gamma-D-Glu-L-Lys-D-Ala-D-Ala)](n)-di-trans,octa-cis-undecaprenyl diphosphate + beta-D-GlcNAc-(1-&gt;4)-Mur2Ac(oyl-L-Ala-gamma-D-Glu-L-Lys-D-Ala-D-Ala)-di-trans,octa-cis-undecaprenyl diphosphate = [GlcNAc-(1-&gt;4)-Mur2Ac(oyl-L-Ala-gamma-D-Glu-L-Lys-D-Ala-D-Ala)](n+1)-di-trans,octa-cis-undecaprenyl diphosphate + di-trans,octa-cis-undecaprenyl diphosphate + H(+). The enzyme catalyses Preferential cleavage: (Ac)2-L-Lys-D-Ala-|-D-Ala. Also transpeptidation of peptidyl-alanyl moieties that are N-acyl substituents of D-alanine.. The protein operates within cell wall biogenesis; peptidoglycan biosynthesis. In terms of biological role, cell wall formation. Synthesis of cross-linked peptidoglycan from the lipid intermediates. The enzyme has a penicillin-insensitive transglycosylase N-terminal domain (formation of linear glycan strands) and a penicillin-sensitive transpeptidase C-terminal domain (cross-linking of the peptide subunits). This Clostridium tetani (strain Massachusetts / E88) protein is Penicillin-binding protein 1A (pbpA).